The chain runs to 291 residues: N-acetylmannosamine kinase (291 aa).

Residues 5 to 12 (AIDIGGTK) and 132 to 139 (GVGGGVVS) each bind ATP. Positions 156, 166, 168, and 173 each coordinate Zn(2+).

This sequence belongs to the ROK (NagC/XylR) family. NanK subfamily. As to quaternary structure, homodimer.

It carries out the reaction an N-acyl-D-mannosamine + ATP = an N-acyl-D-mannosamine 6-phosphate + ADP + H(+). It functions in the pathway amino-sugar metabolism; N-acetylneuraminate degradation; D-fructose 6-phosphate from N-acetylneuraminate: step 2/5. Its function is as follows. Catalyzes the phosphorylation of N-acetylmannosamine (ManNAc) to ManNAc-6-P. This chain is N-acetylmannosamine kinase, found in Escherichia coli O127:H6 (strain E2348/69 / EPEC).